The sequence spans 396 residues: Cysteine desulfurase (396 aa).

Residues 71 to 72 (GT), Asn148, Gln176, and 196 to 198 (SGH) each bind pyridoxal 5'-phosphate. Lys199 carries the N6-(pyridoxal phosphate)lysine modification. A pyridoxal 5'-phosphate-binding site is contributed by Thr231. The active-site Cysteine persulfide intermediate is the Cys319. Cys319 is a [2Fe-2S] cluster binding site.

This sequence belongs to the class-V pyridoxal-phosphate-dependent aminotransferase family. NifS/IscS subfamily. Homodimer. It depends on pyridoxal 5'-phosphate as a cofactor.

The enzyme catalyses (sulfur carrier)-H + L-cysteine = (sulfur carrier)-SH + L-alanine. Its function is as follows. Catalyzes the removal of elemental sulfur atoms from cysteine to produce alanine. Seems to participate in the biosynthesis of the nitrogenase metalloclusters by providing the inorganic sulfur required for the Fe-S core formation. In Azotobacter chroococcum mcd 1, this protein is Cysteine desulfurase.